The sequence spans 352 residues: Biotin synthase (352 aa).

A Radical SAM core domain is found at 44-262 (NRVQVSTLLS…LAVARILMPK (219 aa)). Residues Cys-59, Cys-63, and Cys-66 each contribute to the [4Fe-4S] cluster site. [2Fe-2S] cluster-binding residues include Cys-103, Cys-134, Cys-194, and Arg-266.

Belongs to the radical SAM superfamily. Biotin synthase family. As to quaternary structure, homodimer. The cofactor is [4Fe-4S] cluster. [2Fe-2S] cluster serves as cofactor.

It catalyses the reaction (4R,5S)-dethiobiotin + (sulfur carrier)-SH + 2 reduced [2Fe-2S]-[ferredoxin] + 2 S-adenosyl-L-methionine = (sulfur carrier)-H + biotin + 2 5'-deoxyadenosine + 2 L-methionine + 2 oxidized [2Fe-2S]-[ferredoxin]. Its pathway is cofactor biosynthesis; biotin biosynthesis; biotin from 7,8-diaminononanoate: step 2/2. Functionally, catalyzes the conversion of dethiobiotin (DTB) to biotin by the insertion of a sulfur atom into dethiobiotin via a radical-based mechanism. The chain is Biotin synthase from Pseudomonas syringae pv. syringae (strain B728a).